A 711-amino-acid chain; its full sequence is K(+)-insensitive pyrophosphate-energized proton pump (711 aa).

Helical transmembrane passes span 7–27 (LIYGVIVIAALVIIGLIKFIF), 58–78 (IASLALIVAVIIVVANYYGHL), 85–105 (ALSFALHVGFAFITGAFCSAL), 145–165 (LAVTALSLFGVATLFLAYGGL), and 179–199 (IVGFGFGASFVALFAQLGGGI). Lys-202 serves as a coordination point for substrate. Mg(2+) is bound by residues Asp-205, Asp-209, and Asp-235. A run of 6 helical transmembrane segments spans residues 251–271 (TAAENIGAMILGVGLYPIFGW), 274–294 (ILFPLVARAIGIIASIIGIFF), 311–331 (GYFVTTVVNLIALFFAVKVML), 343–363 (YLLLYGAVVTGVILSYIFVFL), 403–423 (LPVIFISAAIYIAYKLGEMAI), and 431–451 (LYGTAIATMGMLSTTAYILAM). Asp-459 contacts Mg(2+). Helical transmembrane passes span 495 to 515 (YAIGSAALATFLLFSAYLDEV), 535 to 555 (EVFIGAFIGAMIVYLFSSTAI), 602 to 622 (EMVIPGLIVVVTPILVGVILG), and 624 to 644 (EAAAAFLMIGTISGVILALYL). Asp-652, Asp-678, and Asp-682 together coordinate Ca(2+). Residue Lys-685 coordinates substrate. A helical transmembrane segment spans residues 690-710 (PSLHVLIKLISTITLVFVALF).

It belongs to the H(+)-translocating pyrophosphatase (TC 3.A.10) family. K(+)-insensitive subfamily. In terms of assembly, homodimer. The cofactor is Mg(2+).

The protein localises to the cell membrane. It catalyses the reaction diphosphate + H2O + H(+)(in) = 2 phosphate + 2 H(+)(out). Proton pump that utilizes the energy of pyrophosphate hydrolysis as the driving force for proton movement across the membrane. Generates a proton motive force. The protein is K(+)-insensitive pyrophosphate-energized proton pump of Caldanaerobacter subterraneus subsp. tengcongensis (strain DSM 15242 / JCM 11007 / NBRC 100824 / MB4) (Thermoanaerobacter tengcongensis).